We begin with the raw amino-acid sequence, 141 residues long: Putative pre-16S rRNA nuclease (141 aa).

The protein belongs to the YqgF nuclease family.

Its subcellular location is the cytoplasm. Could be a nuclease involved in processing of the 5'-end of pre-16S rRNA. The sequence is that of Putative pre-16S rRNA nuclease from Pseudomonas putida (strain ATCC 47054 / DSM 6125 / CFBP 8728 / NCIMB 11950 / KT2440).